The following is a 634-amino-acid chain: GTP-binding protein 4 (634 aa).

Position 2 is an N-acetylalanine (A2). The residue at position 103 (K103) is an N6-acetyllysine; alternate. K103 participates in a covalent cross-link: Glycyl lysine isopeptide (Lys-Gly) (interchain with G-Cter in SUMO2); alternate. The residue at position 122 (S122) is a Phosphoserine. The OBG-type G domain occupies 169 to 340 (RTLLLCGYPN…VKTEACDRLL (172 aa)). Residues 175–182 (GYPNVGKS), 221–225 (DTPGI), and 289–292 (NKCD) each bind GTP. Residue K332 forms a Glycyl lysine isopeptide (Lys-Gly) (interchain with G-Cter in SUMO2) linkage. Residues S468, S470, and S472 each carry the phosphoserine modification. The tract at residues 495–517 (ILESKEKNTQGPRMPRTAKKVQR) is disordered. Position 522 is an N6-acetyllysine (K522). The tract at residues 529–634 (VDMDDKDDAH…KRKAGKKDRR (106 aa)) is disordered. Residue K534 forms a Glycyl lysine isopeptide (Lys-Gly) (interchain with G-Cter in SUMO2) linkage. Residues 544 to 554 (RRSRSITRKRK) are compositionally biased toward basic residues. A Phosphoserine modification is found at S558. Over residues 560–572 (PPSSVARSGSCSR) the composition is skewed to polar residues. Positions 573-585 (TPRDVSGLRDVKM) are enriched in basic and acidic residues. Residues 586–604 (VKKAKTMMKNAQKKMNRLG) show a composition bias toward basic residues. Positions 605–618 (KKGEADRHVFDMKP) are enriched in basic and acidic residues. Residues 619–634 (KHLLSGKRKAGKKDRR) are compositionally biased toward basic residues.

The protein belongs to the TRAFAC class OBG-HflX-like GTPase superfamily. OBG GTPase family. NOG subfamily. Associates with pre-60S ribosomal particles. Interacts with MINAS-60 (product of an alternative open reading frame of RBM10).

The protein resides in the nucleus. Its subcellular location is the nucleolus. Involved in the biogenesis of the 60S ribosomal subunit. Acts as a TP53 repressor, preventing TP53 stabilization and cell cycle arrest. The protein is GTP-binding protein 4 of Homo sapiens (Human).